The sequence spans 130 residues: Small ribosomal subunit protein uS9 (130 aa).

The protein belongs to the universal ribosomal protein uS9 family.

This Bordetella avium (strain 197N) protein is Small ribosomal subunit protein uS9.